The following is a 677-amino-acid chain: Platelet glycoprotein Ib alpha chain (677 aa).

Positions methionine 1–proline 16 are cleaved as a signal peptide. Positions glutamate 17–glycine 47 constitute an LRRNT domain. The Extracellular portion of the chain corresponds to glutamate 17–leucine 564. An intrachain disulfide couples cysteine 20 to cysteine 33. LRR repeat units lie at residues arginine 72–proline 93, arginine 94–leucine 115, alanine 117–glycine 138, histidine 141–proline 162, glutamine 165–glycine 186, and glutamate 189–aspartate 210. The LRRCT domain occupies asparagine 221–serine 282. Disulfide bonds link cysteine 225/cysteine 264 and cysteine 227/cysteine 280. 2 positions are modified to sulfotyrosine: tyrosine 291 and tyrosine 294. O-linked (GalNAc...) threonine glycans are attached at residues threonine 309, threonine 319, threonine 323, threonine 324, threonine 346, threonine 354, threonine 368, threonine 372, threonine 376, threonine 377, and threonine 399. Positions threonine 359–threonine 499 are disordered. Composition is skewed to low complexity over residues proline 362–threonine 385, proline 393–isoleucine 403, proline 411–isoleucine 421, and threonine 427–isoleucine 470. The segment covering proline 471–proline 485 has biased composition (pro residues). A compositionally biased stretch (low complexity) spans proline 486–threonine 499. A glycan (O-linked (GalNAc...) threonine) is linked at threonine 487. The O-linked (GalNAc...) serine glycan is linked to serine 497. A glycan (O-linked (GalNAc...) threonine) is linked at threonine 500. Serine 523 carries an O-linked (GalNAc...) serine glycan. Residues glycine 565–leucine 585 traverse the membrane as a helical segment. Residues threonine 586 to leucine 677 are Cytoplasmic-facing. 2 positions are modified to phosphoserine: serine 654 and serine 657.

In terms of assembly, two GP-Ib beta are disulfide-linked to one GP-Ib alpha. GP-IX is complexed with the GP-Ib heterodimer via a non covalent linkage. Interacts with FLNB. Interacts with FLNA (via filamin repeats 4, 9, 12, 17, 19, 21, and 23). In terms of processing, O-glycosylated. Post-translationally, glycocalicin is the product of a proteolytic cleavage/shedding, catalyzed by ADAM17, which releases most of the extracellular domain. Binding sites for vWF and thrombin are in this part of the protein.

It localises to the membrane. In terms of biological role, GP-Ib, a surface membrane protein of platelets, participates in the formation of platelet plugs by binding to the A1 domain of vWF, which is already bound to the subendothelium. The protein is Platelet glycoprotein Ib alpha chain (GP1BA) of Canis lupus familiaris (Dog).